We begin with the raw amino-acid sequence, 626 residues long: SHC-transforming protein 4 (626 aa).

Residues 1–185 (MRERSQDSQA…KQDGPPLQHL (185 aa)) form a CH2 region. Disordered stretches follow at residues 38-76 (ITSL…TVSS) and 119-182 (LQEN…GPPL). Polar residues predominate over residues 120-139 (QENQDQTPSRPASPESNLNR). One can recognise a PID domain in the interval 186 to 369 (LGNGLNYCVR…LVDGAPEDRD (184 aa)). The segment at 370–521 (HDYYNSIPGK…HIRQQLWDEE (152 aa)) is CH1. Tyr-422 is subject to Phosphotyrosine. The SH2 domain occupies 522–613 (CFHGKLSRGA…GSEVRLKQPI (92 aa)).

Interacts (via PID domain) with phosphorylated MUSK (via NPXY motif); undergoes tyrosine phosphorylation downstream of activated MUSK. Interacts with GRB2; the interaction is dependent of Tyr-422 phosphorylation and increased by EGF. Post-translationally, phosphorylated; the phosphorylation is enhanced by EGF. Phosphorylation at Tyr-422 is required for the interaction with GRB2. Expressed in both brain and skeletal muscle; widely expressed in brain namely olfactory bulb, cortex, hippocampus, striatum, thalamus, and brain stem (at protein level). Only expressed in melanomas. Weakly expressed in normal melanocytes and benign nevi. Highly expressed at the transition from radial growth phase to vertical growth phase and metastatic melanomas, when tumor cells acquire migratory competence and invasive potential.

The protein resides in the postsynaptic cell membrane. Activates both Ras-dependent and Ras-independent migratory pathways in melanomas. Contributes to the early phases of agrin-induced tyrosine phosphorylation of CHRNB1. This Mus musculus (Mouse) protein is SHC-transforming protein 4 (Shc4).